A 179-amino-acid chain; its full sequence is Crossover junction endodeoxyribonuclease RuvC (179 aa).

Active-site residues include D12, E72, and D144. Mg(2+)-binding residues include D12, E72, and D144.

This sequence belongs to the RuvC family. In terms of assembly, homodimer which binds Holliday junction (HJ) DNA. The HJ becomes 2-fold symmetrical on binding to RuvC with unstacked arms; it has a different conformation from HJ DNA in complex with RuvA. In the full resolvosome a probable DNA-RuvA(4)-RuvB(12)-RuvC(2) complex forms which resolves the HJ. It depends on Mg(2+) as a cofactor.

It is found in the cytoplasm. The catalysed reaction is Endonucleolytic cleavage at a junction such as a reciprocal single-stranded crossover between two homologous DNA duplexes (Holliday junction).. The RuvA-RuvB-RuvC complex processes Holliday junction (HJ) DNA during genetic recombination and DNA repair. Endonuclease that resolves HJ intermediates. Cleaves cruciform DNA by making single-stranded nicks across the HJ at symmetrical positions within the homologous arms, yielding a 5'-phosphate and a 3'-hydroxyl group; requires a central core of homology in the junction. The consensus cleavage sequence is 5'-(A/T)TT(C/G)-3'. Cleavage occurs on the 3'-side of the TT dinucleotide at the point of strand exchange. HJ branch migration catalyzed by RuvA-RuvB allows RuvC to scan DNA until it finds its consensus sequence, where it cleaves and resolves the cruciform DNA. This chain is Crossover junction endodeoxyribonuclease RuvC, found in Dechloromonas aromatica (strain RCB).